The chain runs to 476 residues: C-terminal-binding protein (476 aa).

Residues Ser100, 180 to 185 (VGLGRI), Asp204, 237 to 243 (CTLNEHN), 264 to 266 (TAR), and Asp290 each bind NAD(+). Arg266 is an active-site residue. The active site involves Glu295. Catalysis depends on His315, which acts as the Proton donor. 315 to 318 (HAAF) serves as a coordination point for NAD(+). The tract at residues 445–476 (VSSQSPLSAPDPNNHLSSSIKTEVKAESTEAP) is disordered. Residues 466–476 (TEVKAESTEAP) are compositionally biased toward basic and acidic residues.

The protein belongs to the D-isomer specific 2-hydroxyacid dehydrogenase family. In terms of assembly, homodimer. Interacts with hairy (hry), knirps (kni), snail (sna), and Enhancer of split m-delta (HLHm-delta). Complex may be involved in transcriptional repression. Also interacts with adenovirus E1A protein.

It localises to the nucleus. Its function is as follows. Corepressor targeting diverse transcription regulators. Hairy-interacting protein required for embryonic segmentation and hairy-mediated transcriptional repression. The protein is C-terminal-binding protein (CtBP) of Drosophila melanogaster (Fruit fly).